An 85-amino-acid polypeptide reads, in one-letter code: UPF0335 protein Plav_2034 (85 aa).

Belongs to the UPF0335 family.

This Parvibaculum lavamentivorans (strain DS-1 / DSM 13023 / NCIMB 13966) protein is UPF0335 protein Plav_2034.